Here is a 236-residue protein sequence, read N- to C-terminus: Class B acid phosphatase (236 aa).

An N-terminal signal peptide occupies residues 1-23 (MRKLTLTLSALALALSLNSVADA). The Nucleophile role is filled by Asp68. Mg(2+)-binding residues include Asp68 and Asp70. The active-site Proton donor is the Asp70. Residues 136–137 (TG) and Lys176 each bind substrate. Asp191 contacts Mg(2+).

The protein belongs to the class B bacterial acid phosphatase family. In terms of assembly, homotetramer. It depends on Mg(2+) as a cofactor.

Its subcellular location is the periplasm. The enzyme catalyses a phosphate monoester + H2O = an alcohol + phosphate. With respect to regulation, activated by ethanol. Also activated by Co(2+), Zn(2+) and glycerol. Inhibited by EDTA, inorganic phosphate, nucleosides and Ca(2+). Unaffected by fluoride and tartrate. Dephosphorylates several organic phosphate monoesters including 5'-AMP, 3'-AMP, pNPP, PDP, 5'-UMP, 3'-UMP, G2P, glucose 6-P and ribose 5-P. No activity toward organic phosphate diesters. Also has a phosphotransferase activity catalyzing the transfer of low-energy phosphate groups from organic phosphate monoesters to free hydroxyl groups of various organic compounds. This chain is Class B acid phosphatase (aphA), found in Morganella morganii (Proteus morganii).